We begin with the raw amino-acid sequence, 322 residues long: Alanine dehydrogenase (322 aa).

Residue Lys65 is the Proton donor/acceptor of the active site. Residues Arg108, Thr135–Gln136, Asp157–Arg159, Gly217–Asp219, Lys223, and Ser290 contribute to the NAD(+) site.

This sequence belongs to the ornithine cyclodeaminase/mu-crystallin family. Archaeal alanine dehydrogenase subfamily. In terms of assembly, homodimer.

The catalysed reaction is L-alanine + NAD(+) + H2O = pyruvate + NH4(+) + NADH + H(+). Its function is as follows. Catalyzes the NAD(+)-dependent oxidative deamination of L-alanine to pyruvate, and the reverse reaction, the reductive amination of pyruvate. Its physiological role is not known. Cannot use NADP(+) instead of NAD(+) as a cosubstrate. In the deamination direction, can also efficiently use L-2-aminobutyrate as substrate. In the reductive amination direction, also exhibits high activity with 2-oxobutyrate and oxaloacetate as substrate. In contrast to bacterial homologs, does not exhibit any ornithine cyclodeaminase activity. In Archaeoglobus fulgidus (strain ATCC 49558 / DSM 4304 / JCM 9628 / NBRC 100126 / VC-16), this protein is Alanine dehydrogenase.